A 544-amino-acid chain; its full sequence is Protein angel homolog 2 (544 aa).

The protein belongs to the CCR4/nocturin family.

The chain is Protein angel homolog 2 (ANGEL2) from Homo sapiens (Human).